The sequence spans 1348 residues: Phosphoribosylformylglycinamidine synthase (1348 aa).

ATP is bound by residues 300-311 (GAATGAGGEIRD) and Ala-701. Mg(2+) contacts are provided by Asp-702, Glu-741, Asn-745, and Asp-941. Ser-943 contributes to the ATP binding site. The Glutamine amidotransferase type-1 domain maps to 1099-1348 (VAILREQGVN…MFRNARVWCG (250 aa)). Cys-1192 serves as the catalytic Nucleophile. Residues His-1313 and Glu-1315 contribute to the active site.

This sequence in the N-terminal section; belongs to the FGAMS family. As to quaternary structure, monomer.

Its subcellular location is the cytoplasm. The enzyme catalyses N(2)-formyl-N(1)-(5-phospho-beta-D-ribosyl)glycinamide + L-glutamine + ATP + H2O = 2-formamido-N(1)-(5-O-phospho-beta-D-ribosyl)acetamidine + L-glutamate + ADP + phosphate + H(+). The protein operates within purine metabolism; IMP biosynthesis via de novo pathway; 5-amino-1-(5-phospho-D-ribosyl)imidazole from N(2)-formyl-N(1)-(5-phospho-D-ribosyl)glycinamide: step 1/2. Phosphoribosylformylglycinamidine synthase involved in the purines biosynthetic pathway. Catalyzes the ATP-dependent conversion of formylglycinamide ribonucleotide (FGAR) and glutamine to yield formylglycinamidine ribonucleotide (FGAM) and glutamate. The protein is Phosphoribosylformylglycinamidine synthase of Xanthomonas axonopodis pv. citri (strain 306).